We begin with the raw amino-acid sequence, 317 residues long: Methionyl-tRNA formyltransferase (317 aa).

Ser117–Pro120 contacts (6S)-5,6,7,8-tetrahydrofolate.

Belongs to the Fmt family.

It catalyses the reaction L-methionyl-tRNA(fMet) + (6R)-10-formyltetrahydrofolate = N-formyl-L-methionyl-tRNA(fMet) + (6S)-5,6,7,8-tetrahydrofolate + H(+). In terms of biological role, attaches a formyl group to the free amino group of methionyl-tRNA(fMet). The formyl group appears to play a dual role in the initiator identity of N-formylmethionyl-tRNA by promoting its recognition by IF2 and preventing the misappropriation of this tRNA by the elongation apparatus. This is Methionyl-tRNA formyltransferase from Herminiimonas arsenicoxydans.